The primary structure comprises 301 residues: MKIGILSQFPELYSTRRLVAACESRGHEAVVINTLNCYMNINSIKPSIHYQGQELTGFDAIIPRIHASVTFYGCAVVRQFEMMGVFAANDSISIARSRDKLRALQLLSRKGIGMPITGFANKPNDIPDLINMVGGAPLVIKLLEGTQGIGVVLAETKTAAESVIEAFLGLKANIMLQEYIKESNGSDIRCFVVGDKVVASMKRQGPEGDFRSNLHLGGCGEKVKITPKERKMAVAAVKAMGLVVAGVDILRSNRGPLILEVNSAPGIEGIEQTTGISVTEPIVEYIEKMVLAQKSNRPVIA.

The 184-residue stretch at 104-287 (LQLLSRKGIG…VTEPIVEYIE (184 aa)) folds into the ATP-grasp domain. ATP is bound by residues K141, 178 to 179 (EY), D187, and 211 to 213 (RSN). Mg(2+)-binding residues include D248, E260, and N262. Residues D248, E260, and N262 each contribute to the Mn(2+) site.

The protein belongs to the RimK family. Mg(2+) is required as a cofactor. Mn(2+) serves as cofactor.

The polypeptide is Probable alpha-L-glutamate ligase 1 (Shewanella oneidensis (strain ATCC 700550 / JCM 31522 / CIP 106686 / LMG 19005 / NCIMB 14063 / MR-1)).